We begin with the raw amino-acid sequence, 109 residues long: MRGPKPTLQEIVLDLCPYNEIQPVDLVCHEQLGESEDEIDEPDHAVNHQHQLLARRDEPQRHTIQCSCCKCNNTLQLVVEASRDTLRQLQQLFMDSLGFVCPWCATANQ.

Residues 1 to 41 (MRGPKPTLQEIVLDLCPYNEIQPVDLVCHEQLGESEDEIDE) form an E7 terminal domain region. Residues 26–30 (LVCHE) carry the LXCXE motif; interaction with host RB1 and TMEM173/STING motif. The segment at 68-104 (CCKCNNTLQLVVEASRDTLRQLQQLFMDSLGFVCPWC) is a zinc-finger region. The Nuclear export signal signature appears at 86-94 (LRQLQQLFM).

Belongs to the papillomaviridae E7 protein family. In terms of assembly, homodimer. Homooligomer. Interacts with host RB1; this interaction induces dissociation of RB1-E2F1 complex thereby disrupting RB1 activity. Interacts with host EP300; this interaction represses EP300 transcriptional activity. Interacts with protein E2; this interaction inhibits E7 oncogenic activity. Interacts with host TMEM173/STING; this interaction impairs the ability of TMEM173/STING to sense cytosolic DNA and promote the production of type I interferon (IFN-alpha and IFN-beta). In terms of processing, highly phosphorylated.

It localises to the host cytoplasm. The protein resides in the host nucleus. Its function is as follows. Plays a role in viral genome replication by driving entry of quiescent cells into the cell cycle. Stimulation of progression from G1 to S phase allows the virus to efficiently use the cellular DNA replicating machinery to achieve viral genome replication. E7 protein has both transforming and trans-activating activities. Induces the disassembly of the E2F1 transcription factor from RB1, with subsequent transcriptional activation of E2F1-regulated S-phase genes. Interferes with host histone deacetylation mediated by HDAC1 and HDAC2, leading to transcription activation. Also plays a role in the inhibition of both antiviral and antiproliferative functions of host interferon alpha. Interaction with host TMEM173/STING impairs the ability of TMEM173/STING to sense cytosolic DNA and promote the production of type I interferon (IFN-alpha and IFN-beta). The sequence is that of Protein E7 from Human papillomavirus 39.